Reading from the N-terminus, the 719-residue chain is Potassium-transporting ATPase ATP-binding subunit (719 aa).

4 consecutive transmembrane segments (helical) span residues 35–55 (LFVV…PGLF), 62–82 (VYYA…NYAE), 228–248 (ILLS…FFFG), and 254–274 (FVGG…VALM). Catalysis depends on Asp-318, which acts as the 4-aspartylphosphate intermediate. ATP-binding residues include Asp-355 and Glu-359. Positions 372–396 (GKVQTDGGQSASEELDEPGDSVDAP) are disordered. Positions 373–383 (KVQTDGGQSAS) are enriched in polar residues. ATP contacts are provided by residues 416-423 (FSAETRMS) and Lys-435. Mg(2+) is bound by residues Asp-554 and Asp-558. 3 consecutive transmembrane segments (helical) span residues 624-644 (FVLL…MDIL), 652-672 (AVTA…PLAL), and 698-718 (LIAP…LGVF).

The protein belongs to the cation transport ATPase (P-type) (TC 3.A.3) family. Type IA subfamily. As to quaternary structure, the system is composed of three essential subunits: KdpA, KdpB and KdpC. The complex also contains KdpF, a small non-essential subunit.

The protein localises to the cell membrane. It carries out the reaction K(+)(out) + ATP + H2O = K(+)(in) + ADP + phosphate + H(+). Part of the high-affinity ATP-driven potassium transport (or Kdp) system, which catalyzes the hydrolysis of ATP coupled with the electrogenic transport of potassium into the cytoplasm. This subunit is responsible for energy coupling to the transport system and for the release of the potassium ions to the cytoplasm. The Kdp system is essential for growth under K(+) limitation, and for survival under desiccation and salt crystal inclusion. This chain is Potassium-transporting ATPase ATP-binding subunit, found in Halobacterium salinarum (strain ATCC 29341 / DSM 671 / R1).